The sequence spans 205 residues: Imidazoleglycerol-phosphate dehydratase (205 aa).

Belongs to the imidazoleglycerol-phosphate dehydratase family.

It localises to the cytoplasm. It catalyses the reaction D-erythro-1-(imidazol-4-yl)glycerol 3-phosphate = 3-(imidazol-4-yl)-2-oxopropyl phosphate + H2O. It participates in amino-acid biosynthesis; L-histidine biosynthesis; L-histidine from 5-phospho-alpha-D-ribose 1-diphosphate: step 6/9. The polypeptide is Imidazoleglycerol-phosphate dehydratase (Chloroflexus aurantiacus (strain ATCC 29366 / DSM 635 / J-10-fl)).